Reading from the N-terminus, the 399-residue chain is uncharacterized protein (399 aa).

The next 10 membrane-spanning stretches (helical) occupy residues 7–27 (FSAL…LYLI), 33–53 (FLQI…FEVP), 79–99 (AFFP…IWAL), 131–151 (LLIT…SLNI), 153–173 (FPFL…SVFI), 208–228 (VLLI…ISRY), 242–262 (SLGY…TLTI), 296–316 (PLGI…HPIV), 335–355 (LNSG…GIIS), and 357–377 (AFGL…PIIL).

Belongs to the major facilitator superfamily. Drug:H(+) antiporter-3 (DHA3) (TC 2.A.1.21) family.

It is found in the cell membrane. This is an uncharacterized protein from Bacillus subtilis (strain 168).